Consider the following 306-residue polypeptide: UDP-3-O-acyl-N-acetylglucosamine deacetylase (306 aa).

Residues His79, His238, and Asp242 each coordinate Zn(2+). The Proton donor role is filled by His265.

The protein belongs to the LpxC family. The cofactor is Zn(2+).

The catalysed reaction is a UDP-3-O-[(3R)-3-hydroxyacyl]-N-acetyl-alpha-D-glucosamine + H2O = a UDP-3-O-[(3R)-3-hydroxyacyl]-alpha-D-glucosamine + acetate. The protein operates within glycolipid biosynthesis; lipid IV(A) biosynthesis; lipid IV(A) from (3R)-3-hydroxytetradecanoyl-[acyl-carrier-protein] and UDP-N-acetyl-alpha-D-glucosamine: step 2/6. Its function is as follows. Catalyzes the hydrolysis of UDP-3-O-myristoyl-N-acetylglucosamine to form UDP-3-O-myristoylglucosamine and acetate, the committed step in lipid A biosynthesis. This Shewanella violacea (strain JCM 10179 / CIP 106290 / LMG 19151 / DSS12) protein is UDP-3-O-acyl-N-acetylglucosamine deacetylase.